Here is a 194-residue protein sequence, read N- to C-terminus: MLDREGFRPNVGIILINTRNEVWWGKRVREHSWQFPQGGIKFGETPEQAMYRELEEEVGLRAEHVKIIGRTRDWLRYEVPDHFIKREIRGHYKGQKQIWFLLRMVGRDCDVNLRMTEHPEFDAWRWHDYWVPLDVVIEFKRDVYQRALQELSRFLSRPTQHVPPQHNTARYLRQTHASRKPDEPSTEKTKPDNE.

The Nudix hydrolase domain occupies 6–149; that stretch reads GFRPNVGIIL…KRDVYQRALQ (144 aa). A Nudix box motif is present at residues 38 to 59; the sequence is GGIKFGETPEQAMYRELEEEVG. The interval 158–194 is disordered; that stretch reads PTQHVPPQHNTARYLRQTHASRKPDEPSTEKTKPDNE. A compositionally biased stretch (basic and acidic residues) spans 179–194; sequence RKPDEPSTEKTKPDNE.

It belongs to the Nudix hydrolase family. RppH subfamily. Requires a divalent metal cation as cofactor.

In terms of biological role, accelerates the degradation of transcripts by removing pyrophosphate from the 5'-end of triphosphorylated RNA, leading to a more labile monophosphorylated state that can stimulate subsequent ribonuclease cleavage. In Janthinobacterium sp. (strain Marseille) (Minibacterium massiliensis), this protein is RNA pyrophosphohydrolase.